We begin with the raw amino-acid sequence, 73 residues long: Homeodomain-only protein (73 aa).

The segment at residues 3-62 (AQTASGPTEDQVEILEYNFNKVNKHPDPTTLCLIAAEAGLTEEQTQKWFKQRLAEWRRSE) is a DNA-binding region (homeobox; degenerate).

In terms of assembly, interacts with serum response factor (SRF). Component of a large complex containing histone deacetylases such as HDAC2. Interacts with the acetylated forms of HSPA1A and HSPA1B. Interacts with HSPA8. Expressed in the embryonic and adult heart and in the adult brain, liver, lung, skeletal muscle, intestine and spleen. Throughout embryonic and postnatal development, it is expressed in the myocardium.

The protein localises to the nucleus. The protein resides in the cytoplasm. Atypical homeodomain protein which does not bind DNA and is required to modulate cardiac growth and development. Acts via its interaction with SRF, thereby modulating the expression of SRF-dependent cardiac-specific genes and cardiac development. Prevents SRF-dependent transcription either by inhibiting SRF binding to DNA or by recruiting histone deacetylase (HDAC) proteins that prevent transcription by SRF. Overexpression causes cardiac hypertrophy. Acts as a co-chaperone for HSPA1A and HSPA1B chaperone proteins and assists in chaperone-mediated protein refolding. The protein is Homeodomain-only protein (Hopx) of Mus musculus (Mouse).